A 431-amino-acid chain; its full sequence is Putative F-box/FBD/LRR-repeat protein At4g26350 (431 aa).

Residues 1-47 (MDIISQCPDHLLLRILSFIPTKDVIVTSLLSKRWGSLWRWVPKLEYD) form the F-box domain. LRR repeat units lie at residues 52 to 78 (NMRF…HLKN), 85 to 109 (CRTV…EISI), 132 to 159 (ILTI…HLRC), 160 to 185 (IGWA…RLAR), and 309 to 334 (CTQG…TLTN). The 51-residue stretch at 348–398 (CWKRPSSVPACLLSSLQAFTWSGYKGRQGDKEVVKYVLRNATGLKKRIFIS) folds into the FBD domain.

The sequence is that of Putative F-box/FBD/LRR-repeat protein At4g26350 from Arabidopsis thaliana (Mouse-ear cress).